A 245-amino-acid polypeptide reads, in one-letter code: MTSTQAVSFDTFQLAAATADLSDESAASDYADIVEFRLDLAYADTSLPDPLTAISAYDHSSSLPLIVTNRPEWEGGAYDGETIDRLEMLITAAKHDAVIAVDIELETLKSQHGKKVARDIRNSGAVIIASTHDFTSTPQQSVLHERLHTAAQLGDIGKLAVTAQTHRDALRVLAATEQASQWGDTVATMAMGALGQHTRVVAPLYGSRIGYAPVNPTDATAPGQYDIKTLSEMIDTLTHTKVEDD.

Residues 35-37 (EFR) and Arg-70 contribute to the 3-dehydroquinate site. The active-site Proton donor/acceptor is the His-132. The Schiff-base intermediate with substrate role is filled by Lys-158. 3 residues coordinate 3-dehydroquinate: Arg-199, Thr-220, and Gln-224.

It belongs to the type-I 3-dehydroquinase family. In terms of assembly, homodimer.

It carries out the reaction 3-dehydroquinate = 3-dehydroshikimate + H2O. Its pathway is metabolic intermediate biosynthesis; chorismate biosynthesis; chorismate from D-erythrose 4-phosphate and phosphoenolpyruvate: step 3/7. Its function is as follows. Involved in the third step of the chorismate pathway, which leads to the biosynthesis of aromatic amino acids. Catalyzes the cis-dehydration of 3-dehydroquinate (DHQ) and introduces the first double bond of the aromatic ring to yield 3-dehydroshikimate. This chain is 3-dehydroquinate dehydratase, found in Haloquadratum walsbyi (strain DSM 16790 / HBSQ001).